A 152-amino-acid polypeptide reads, in one-letter code: Snaclec coagulation factor IX/factor X-binding protein subunit A (152 aa).

Residues Met1–Ala23 form the signal peptide. 3 cysteine pairs are disulfide-bonded: Cys25–Cys36, Cys53–Cys150, and Cys125–Cys142. One can recognise a C-type lectin domain in the interval Tyr32 to Glu151. Residues Ser64, Glu66, and Glu70 each contribute to the Ca(2+) site. Glu151 is a Ca(2+) binding site.

This sequence belongs to the snaclec family. Heterodimer of subunits A and B; disulfide-linked. As to expression, expressed by the venom gland.

The protein localises to the secreted. Functionally, anticoagulant protein which binds to the gamma-carboxyglutamic acid-domain regions of factors IX (F9) and factor X (F10) in the presence of calcium with a 1 to 1 stoichiometry. The sequence is that of Snaclec coagulation factor IX/factor X-binding protein subunit A from Gloydius halys (Chinese water mocassin).